A 512-amino-acid polypeptide reads, in one-letter code: MMKESKSITQHEVERESVSSKRAIKKRLLLFKIDLFVLSFVCLQYWINYVDRVGFTNAYISGMKEDLKMVGNDLTVSNTVFMIGYIVGMVPNNLMLLCVPPRIWLSFCTFAWGLLTLGMYKVTSFKHICAIRFFQALFESCTFSGTHFVLGSWYKEDELPIRSAIFTGSGLVGSMFSGFMQTSIFTHLNGRNGLAGWRWLFIIDFCITLPIAIYGFIFFPGLPDQTSAVSKFSMTRYIFNEQELHYARRRLPARDESTRLDWSTIPRVLKRWHWWMFSLVWVLGGENLGFASNSTFALWLQNQKYTLAQRNNYPSGIFAVGIVSTLCSAVYMSKIPRARHWHVSVFISLVMVIVAVLIRADPLNPKVVFSAQYLGGVAYAGQAVFFSWANIICHADLQERAIVLASMNMFSGAVNAWWSILFFASDMVPKFERGCYALLATAISSGIVSVVIRSLQIKENLSKKQVPYIDANDMPGEDDDDDNQDNENDGDDESMEVELHNEEMAEISNPFR.

The Cytoplasmic segment spans residues 1–27 (MMKESKSITQHEVERESVSSKRAIKKR). Residues 28–48 (LLLFKIDLFVLSFVCLQYWIN) form a helical membrane-spanning segment. The Extracellular portion of the chain corresponds to 49–79 (YVDRVGFTNAYISGMKEDLKMVGNDLTVSNT). A helical membrane pass occupies residues 80–100 (VFMIGYIVGMVPNNLMLLCVP). Topologically, residues 101–102 (PR) are cytoplasmic. Residues 103–123 (IWLSFCTFAWGLLTLGMYKVT) form a helical membrane-spanning segment. Residues 124–132 (SFKHICAIR) lie on the Extracellular side of the membrane. A helical transmembrane segment spans residues 133–153 (FFQALFESCTFSGTHFVLGSW). The Cytoplasmic portion of the chain corresponds to 154–164 (YKEDELPIRSA). The chain crosses the membrane as a helical span at residues 165–185 (IFTGSGLVGSMFSGFMQTSIF). At 186-198 (THLNGRNGLAGWR) the chain is on the extracellular side. Residues 199 to 219 (WLFIIDFCITLPIAIYGFIFF) traverse the membrane as a helical segment. Residues 220 to 271 (PGLPDQTSAVSKFSMTRYIFNEQELHYARRRLPARDESTRLDWSTIPRVLKR) are Cytoplasmic-facing. Residues 272–292 (WHWWMFSLVWVLGGENLGFAS) traverse the membrane as a helical segment. Residues 293 to 312 (NSTFALWLQNQKYTLAQRNN) lie on the Extracellular side of the membrane. Residues 313-333 (YPSGIFAVGIVSTLCSAVYMS) form a helical membrane-spanning segment. Over 334–342 (KIPRARHWH) the chain is Cytoplasmic. Residues 343-363 (VSVFISLVMVIVAVLIRADPL) traverse the membrane as a helical segment. Residues 364–372 (NPKVVFSAQ) are Extracellular-facing. The helical transmembrane segment at 373–393 (YLGGVAYAGQAVFFSWANIIC) threads the bilayer. Over 394–401 (HADLQERA) the chain is Cytoplasmic. Residues 402 to 422 (IVLASMNMFSGAVNAWWSILF) form a helical membrane-spanning segment. Residues 423-434 (FASDMVPKFERG) lie on the Extracellular side of the membrane. Residues 435–455 (CYALLATAISSGIVSVVIRSL) traverse the membrane as a helical segment. Topologically, residues 456–512 (QIKENLSKKQVPYIDANDMPGEDDDDDNQDNENDGDDESMEVELHNEEMAEISNPFR) are cytoplasmic. The segment at 468 to 512 (YIDANDMPGEDDDDDNQDNENDGDDESMEVELHNEEMAEISNPFR) is disordered. Positions 475 to 496 (PGEDDDDDNQDNENDGDDESME) are enriched in acidic residues.

The protein belongs to the major facilitator superfamily. Allantoate permease family.

It is found in the cell membrane. Transports pantothenate into the cell. Also involved in the catabolite repression-mediated regulation of ergosterol biosynthesis and in fenpropimorph resistance. The protein is Pantothenate transporter FEN2 (FEN2) of Saccharomyces cerevisiae (strain ATCC 204508 / S288c) (Baker's yeast).